The chain runs to 369 residues: Tyrosine-protein phosphatase non-receptor type 5 (369 aa).

Ser49 carries the phosphoserine; by PKA modification. The residue at position 59 (Thr59) is a Phosphothreonine; by MAPK. Ser72 carries the post-translational modification Phosphoserine; by MAPK. The region spanning 104 to 359 (LQAEFFEIPM…QFVHHAMSLY (256 aa)) is the Tyrosine-protein phosphatase domain. Residues Asp265, 300 to 306 (CSAGIGR), and Gln344 contribute to the substrate site. Cys300 (phosphocysteine intermediate) is an active-site residue.

It belongs to the protein-tyrosine phosphatase family. Non-receptor class subfamily. Phosphorylation at Ser-49 by PKA deactivates PTPN5. Phosphorylation at Thr-59 and Ser-72 by MAPKs stabilizes the phosphatase, dephosphorylation of these sites results in ubiquitin-mediated degradation of the active phosphatase. Expressed in the central nervous system except in the cerebellum. Enriched within the striatum relative to other brain areas.

The protein localises to the cytoplasm. The catalysed reaction is O-phospho-L-tyrosyl-[protein] + H2O = L-tyrosyl-[protein] + phosphate. May regulate the activity of several effector molecules involved in synaptic plasticity and neuronal cell survival, including MAPKs, Src family kinases and NMDA receptors. The protein is Tyrosine-protein phosphatase non-receptor type 5 (Ptpn5) of Rattus norvegicus (Rat).